Consider the following 186-residue polypeptide: Probable GTP-binding protein EngB (186 aa).

One can recognise an EngB-type G domain in the interval 18–186 (DKVEICFIGR…LKKLLASEFK (169 aa)). GTP-binding positions include 26–33 (GRSNVGKS), 52–56 (GRTQL), 70–73 (DLPG), 137–140 (TKID), and 166–168 (VSS). The Mg(2+) site is built by serine 33 and threonine 54.

This sequence belongs to the TRAFAC class TrmE-Era-EngA-EngB-Septin-like GTPase superfamily. EngB GTPase family. The cofactor is Mg(2+).

Functionally, necessary for normal cell division and for the maintenance of normal septation. The polypeptide is Probable GTP-binding protein EngB (Mycoplasmopsis pulmonis (strain UAB CTIP) (Mycoplasma pulmonis)).